A 408-amino-acid polypeptide reads, in one-letter code: Peptidase T (408 aa).

Histidine 78 contacts Zn(2+). Aspartate 80 is an active-site residue. Aspartate 141 lines the Zn(2+) pocket. Glutamate 175 acts as the Proton acceptor in catalysis. Residues glutamate 176, aspartate 198, and histidine 380 each contribute to the Zn(2+) site.

It belongs to the peptidase M20B family. Zn(2+) is required as a cofactor.

It localises to the cytoplasm. The enzyme catalyses Release of the N-terminal residue from a tripeptide.. In terms of biological role, cleaves the N-terminal amino acid of tripeptides. In Clostridium botulinum (strain 657 / Type Ba4), this protein is Peptidase T.